Here is a 302-residue protein sequence, read N- to C-terminus: Acetaldehyde dehydrogenase 2 (302 aa).

Cys130 serves as the catalytic Acyl-thioester intermediate. NAD(+) contacts are provided by residues 161-169 (SVGPGTRRN) and Asn272.

The protein belongs to the acetaldehyde dehydrogenase family.

The catalysed reaction is acetaldehyde + NAD(+) + CoA = acetyl-CoA + NADH + H(+). In Cupriavidus necator (strain ATCC 17699 / DSM 428 / KCTC 22496 / NCIMB 10442 / H16 / Stanier 337) (Ralstonia eutropha), this protein is Acetaldehyde dehydrogenase 2.